The sequence spans 349 residues: tRNA pseudouridine synthase D (349 aa).

Phe-26 is a binding site for substrate. Asp-79 acts as the Nucleophile in catalysis. Residue Asn-128 coordinates substrate. Residues 154-302 (GVPNYFGSQR…VEGSRRAVLL (149 aa)) form the TRUD domain. Phe-328 contacts substrate.

The protein belongs to the pseudouridine synthase TruD family.

It carries out the reaction uridine(13) in tRNA = pseudouridine(13) in tRNA. Functionally, responsible for synthesis of pseudouridine from uracil-13 in transfer RNAs. This Yersinia pestis bv. Antiqua (strain Antiqua) protein is tRNA pseudouridine synthase D.